Reading from the N-terminus, the 400-residue chain is Endoplasmin (400 aa).

Lysine 1 is subject to N6-succinyllysine. A glycan (N-linked (GlcNAc...) asparagine) is linked at asparagine 42. Serine 44 carries the phosphoserine modification. Lysine 76 carries the post-translational modification N6-acetyllysine. Residues asparagine 78 and asparagine 99 are each glycosylated (N-linked (GlcNAc...) asparagine). Lysine 230 carries the N6-succinyllysine modification. The segment at 346-400 is disordered; the sequence is IDPEAQVEEEPEEEPEDTTEDTEQDEEEEVDAGTEEEEEEEQETAKESTAEKDEL. Residues 350 to 387 are compositionally biased toward acidic residues; the sequence is AQVEEEPEEEPEDTTEDTEQDEEEEVDAGTEEEEEEEQ. Position 379 is a phosphothreonine (threonine 379). Basic and acidic residues predominate over residues 388 to 400; sequence ETAKESTAEKDEL. The short motif at 397–400 is the Prevents secretion from ER element; sequence KDEL.

This sequence belongs to the heat shock protein 90 family. Homodimer; disulfide-linked. Component of an EIF2 complex at least composed of CELF1/CUGBP1, CALR, CALR3, EIF2S1, EIF2S2, HSP90B1 and HSPA5. Part of a large chaperone multiprotein complex comprising DNAJB11, HSP90B1, HSPA5, HYOU, PDIA2, PDIA4, PDIA6, PPIB, SDF2L1, UGGT1 and very small amounts of ERP29, but not, or at very low levels, CALR nor CANX. Interacts with AIMP1; regulates its retention in the endoplasmic reticulum. Hyperglycosylated form interacts with OS9; promoting its degradation by the endoplasmic reticulum associated degradation (ERAD). Interacts with CNPY3. This interaction is disrupted in the presence of ATP. Interacts with TLR4 and TLR9, but not with TLR3. Interacts with MZB1 in a calcium-dependent manner. Interacts with METTL23. Interacts with IL1B; the interaction facilitates cargo translocation into the ERGIC. Interacts with EIF2AK3. Post-translationally, phosphorylated by CK2. N-glycosylated cotranslationally at Asn-217 by STT3A-containing OST-A complex: this glycosylation is constitutive. In response to various stress, 5 additional facultative sites (Asn-62, Asn-107, Asn-445, Asn-481 and Asn-502) can be glycosylated post-translationally by STT3B-containing OST-B complex, leading to a hyperglycosylated form that is degraded by the ER-associated degradation (ERAD) pathway. In normal conditions, the OST-A complex together with CCDC134 prevent glycosylation at facultative sites during protein folding, thereby preventing hyperglycosylation. Mechanistically, nascent HSP90B1 is tethered during translation to a specialized CCDC134-containing translocon that forms a microenvironment for its folding, in which STT3A associates with the SRT pseudosubstrate motif, and prevents access to facultative glycosylation sites until folding is completed, rendering its facultative sites inaccessible to the OST-B complex.

The protein resides in the endoplasmic reticulum lumen. Its subcellular location is the sarcoplasmic reticulum lumen. The protein localises to the melanosome. The enzyme catalyses ATP + H2O = ADP + phosphate + H(+). Functionally, ATP-dependent chaperone involved in the processing of proteins in the endoplasmic reticulum, regulating their transport. Together with MESD, acts as a modulator of the Wnt pathway by promoting the folding of LRP6, a coreceptor of the canonical Wnt pathway. When associated with CNPY3, required for proper folding of Toll-like receptors. Promotes folding and trafficking of TLR4 to the cell surface. May participate in the unfolding of cytosolic leaderless cargos (lacking the secretion signal sequence) such as the interleukin 1/IL-1 to facilitate their translocation into the ERGIC (endoplasmic reticulum-Golgi intermediate compartment) and secretion; the translocation process is mediated by the cargo receptor TMED10. The polypeptide is Endoplasmin (HSP90B1) (Mesocricetus auratus (Golden hamster)).